We begin with the raw amino-acid sequence, 257 residues long: Tryptophan synthase alpha chain (257 aa).

Catalysis depends on proton acceptor residues E44 and D55.

Belongs to the TrpA family. Tetramer of two alpha and two beta chains.

The catalysed reaction is (1S,2R)-1-C-(indol-3-yl)glycerol 3-phosphate + L-serine = D-glyceraldehyde 3-phosphate + L-tryptophan + H2O. It participates in amino-acid biosynthesis; L-tryptophan biosynthesis; L-tryptophan from chorismate: step 5/5. In terms of biological role, the alpha subunit is responsible for the aldol cleavage of indoleglycerol phosphate to indole and glyceraldehyde 3-phosphate. This chain is Tryptophan synthase alpha chain, found in Chlamydia felis (strain Fe/C-56) (Chlamydophila felis).